An 86-amino-acid chain; its full sequence is Small ribosomal subunit protein bS18 (86 aa).

It belongs to the bacterial ribosomal protein bS18 family. As to quaternary structure, part of the 30S ribosomal subunit. Forms a tight heterodimer with protein bS6.

Its function is as follows. Binds as a heterodimer with protein bS6 to the central domain of the 16S rRNA, where it helps stabilize the platform of the 30S subunit. This chain is Small ribosomal subunit protein bS18, found in Heliobacterium modesticaldum (strain ATCC 51547 / Ice1).